The following is a 706-amino-acid chain: Catalase HPII (706 aa).

Residues H77 and N151 contribute to the active site. A heme-binding site is contributed by Y365. The tract at residues 512-532 (EPPEEQVDESAPVSPALSQVT) is disordered.

Belongs to the catalase family. HPII subfamily. Requires heme as cofactor.

The protein resides in the cytoplasm. It catalyses the reaction 2 H2O2 = O2 + 2 H2O. Its function is as follows. Decomposes hydrogen peroxide into water and oxygen; serves to protect cells from the toxic effects of hydrogen peroxide. This Mycobacterium avium protein is Catalase HPII (katE).